Reading from the N-terminus, the 842-residue chain is MSKYDFKKIEKKWQNYWDKHKTYKVNEDPNVPKEKRIYILDMFPYPSANGLHVGHPEGYTATDILTRYKLLNGFNVLHPMGFDSFGLPAENYAIQTGKHPKKITEKNIEKFKEQIKALGFAYDWDREIKTHDVNYYKWTQWIFLQLYKKGLAYTKEIPVWYCPDLGTVLANEEVIQTPDGPRSERGFHKVERKPLRQWLLKITKYAERLIRDLEEVDWPDSVKEMQKNWIGKSTGVEIEFLIKESKEKIKVFTTRPDTIFGVTYLVLAPEHPMVDKITKDELKPIISKYKDKEILKSDLERTSLEKDKTGIFTGAYAINPITKEEIPIWIGSYILGTYGTGAVMSVPAHDERDFEFAKKYNLPIKQVVSQTGTNEVLIKPFTENGISINTPTEFNNLKTIEVKTKVIKWLIENKMGQEKVNYKLRDWIFSRQRYWGEPIPILFDDNLNEIPLNDDELPLTLPDIENYKPSGTGESPLSKIKDWVNVKRNGKIYKRETNTMPQWAGSCWYYIRYLDPHNEKEFANKEKINYWMPVDLYIGGAEHSVLHLLYARFWHKVLYDLGYVNIKEPFRKLINQGMITSFAYQDENGILIPNDEVEKKDNKFFSKKNNKELKQIIAKMSKSLKNIINPDDIIKEYGADSMRIYEMFMGPLTDSKPWNTQGLIGIFRFLNKIWLIKNKELTNETPPKEIISELHKTIKKVTEDIETLNFNTAISTLMIFINELLKHEKNYLKIFRPISIILSPFAPHLGEELWEFMGEQSSIFKNAKWPKYDLNSIIDDTREIVLQVNGKTKDKIMIKKDTDEKTLKKIAFNNQKIIQNINNKQIIKIITVKDKLVNIVAK.

The 'HIGH' region motif lies at 44 to 55; sequence PYPSANGLHVGH. The 'KMSKS' region signature appears at 619–623; the sequence is KMSKS. Lys-622 serves as a coordination point for ATP.

It belongs to the class-I aminoacyl-tRNA synthetase family.

It localises to the cytoplasm. The catalysed reaction is tRNA(Leu) + L-leucine + ATP = L-leucyl-tRNA(Leu) + AMP + diphosphate. This chain is Leucine--tRNA ligase, found in Borrelia recurrentis (strain A1).